The following is a 192-amino-acid chain: MIPDDEFIKNPSVPGPTAMEVRCLIMCLAEPGKNDVAVDVGCGTGGVTLELAGRVRRVYAIDRNPEAISTTEMNLQRHGLGDNVTLMEGDAPEALCKIPDIDIAVVGGSGGELQEILRIIKDKLKPGGRIIVTAILLETKFEAMECLRDLGFDVNITELNIARGRALDRGTMMVSRNPVALIYTGVSHENKD.

Residues T17, 41 to 45 (GCGTG), D62, and A91 each bind S-adenosyl-L-methionine.

The protein belongs to the methyltransferase superfamily. Archaeal-type CbiT family. Homotetramer.

It catalyses the reaction Co-precorrin-6B + S-adenosyl-L-methionine = Co-precorrin-7 + S-adenosyl-L-homocysteine + CO2. Its pathway is cofactor biosynthesis; adenosylcobalamin biosynthesis; cob(II)yrinate a,c-diamide from sirohydrochlorin (anaerobic route): step 8/10. Functionally, catalyzes the methylation of C-15 in cobalt-precorrin-6B followed by the decarboxylation of C-12 to form cobalt-precorrin-7. This Methanothermobacter thermautotrophicus (strain ATCC 29096 / DSM 1053 / JCM 10044 / NBRC 100330 / Delta H) (Methanobacterium thermoautotrophicum) protein is Probable cobalt-precorrin-6B C(15)-methyltransferase (decarboxylating).